A 63-amino-acid chain; its full sequence is Large ribosomal subunit protein eL37 (63 aa).

Residues Cys20, Cys23, Cys35, and Cys38 each coordinate Zn(2+). The segment at 20–38 (CRRCGRRAFNVKKGYCAAC) adopts a C4-type zinc-finger fold.

This sequence belongs to the eukaryotic ribosomal protein eL37 family. As to quaternary structure, part of the 50S ribosomal subunit. The cofactor is Zn(2+).

Its function is as follows. Binds to the 23S rRNA. The sequence is that of Large ribosomal subunit protein eL37 from Thermococcus kodakarensis (strain ATCC BAA-918 / JCM 12380 / KOD1) (Pyrococcus kodakaraensis (strain KOD1)).